The primary structure comprises 721 residues: YTH domain-containing protein 1 (721 aa).

Residues 29 to 38 show a composition bias toward acidic residues; the sequence is EADIAEELQD. The segment at 29 to 239 is disordered; the sequence is EADIAEELQD…GGGTHSHSQK (211 aa). Over residues 48-75 the composition is skewed to low complexity; the sequence is SESNGGDSSDSEPSISSVSTATSSLAGS. The span at 135 to 151 shows a compositional bias: basic and acidic residues; it reads ASDKVKSKSPDTEDRQP. A YTH domain is found at 254-391; it reads TRFFLIKSNN…KIGGELCRLF (138 aa). RNA is bound by residues 260–262, Trp-276, and Trp-327; that span reads KSN. 3 disordered regions span residues 424–471, 580–605, and 651–721; these read PPRS…RHHH, DGPG…DKAP, and AGGG…DNRR. Gly residues predominate over residues 432–443; the sequence is GHGGGGRGGGRG. A compositionally biased stretch (basic residues) spans 451–471; sequence PMRHKRSYHGAPHHRPYRHHH. Residues 583–600 show a composition bias toward pro residues; the sequence is GAPPLPDYPPPQRPPPPG. The segment covering 651–670 has biased composition (gly residues); that stretch reads AGGGMGAGGGSGGGMGGPGG. Residues 699 to 708 show a composition bias toward basic and acidic residues; sequence RDSRPFRERG.

The protein resides in the nucleus. In terms of biological role, regulator of alternative splicing that specifically recognizes and binds N6-methyladenosine (m6A)-containing RNAs. Acts by acting as a reader of m6A methylation. Required for sex determination and dosage compensation via Sxl alternative splicing: m6A methylation acts as a key regulator of Sxl pre-mRNA and promotes female-specific alternative splicing of Sxl, which determines female physiognomy. M6A methylation is also required for neuronal functions. The chain is YTH domain-containing protein 1 from Drosophila melanogaster (Fruit fly).